The chain runs to 513 residues: GMP synthase [glutamine-hydrolyzing] (513 aa).

Residues 3–200 (SVLVLDFGSQ…LIDIAGITPD (198 aa)) enclose the Glutamine amidotransferase type-1 domain. Cysteine 80 (nucleophile) is an active-site residue. Catalysis depends on residues histidine 174 and glutamate 176. In terms of domain architecture, GMPS ATP-PPase spans 201–388 (WSPKHFIDHQ…LGIAEDILMR (188 aa)). Residue 228–234 (SGGVDSS) participates in ATP binding.

In terms of assembly, homodimer.

It catalyses the reaction XMP + L-glutamine + ATP + H2O = GMP + L-glutamate + AMP + diphosphate + 2 H(+). It participates in purine metabolism; GMP biosynthesis; GMP from XMP (L-Gln route): step 1/1. Its function is as follows. Catalyzes the synthesis of GMP from XMP. This chain is GMP synthase [glutamine-hydrolyzing], found in Chlorobium limicola (strain DSM 245 / NBRC 103803 / 6330).